The primary structure comprises 605 residues: Protein DENND6A (605 aa).

Residues 1-20 form a disordered region; the sequence is MALPGPAVFGPGSRGSLDEA. The region spanning 60–239 is the uDENN domain; the sequence is HCVCVVGFDL…KVRIPTCHDK (180 aa). Position 124 is a phosphoserine (Ser124). In terms of domain architecture, cDENN spans 265 to 390; it reads EVDLFRCFCP…VKVKKLKNLK (126 aa). A dDENN domain is found at 392–525; sequence LDSKPGVYTS…KTRRKEMTQK (134 aa). Lys507 bears the N6-methyllysine mark.

This sequence belongs to the DENND6 family.

Its subcellular location is the recycling endosome. It is found in the cytoplasm. Guanine nucleotide exchange factor (GEF) for RAB14. Component of an endocytic recycling pathway that is required for the control of ADAM10 transport, shedding of N-cadherin/CDH2 by ADAM9 or ADAM10 and regulation of cell-cell junctions. Required for RAB14 recruitment to recycling endosomes. This chain is Protein DENND6A (Dennd6a), found in Mus musculus (Mouse).